Consider the following 471-residue polypeptide: 6-phosphofructo-2-kinase/fructose-2,6-bisphosphatase 1 (471 aa).

At Ser2 the chain carries N-acetylserine. Residues 2–250 are 6-phosphofructo-2-kinase; sequence SREMGELTQT…AYYLMNIHVT (249 aa). The residue at position 33 (Ser33) is a Phosphoserine; by PKA. 49-57 is an ATP binding site; it reads GLPARGKTY. The beta-D-fructose 6-phosphate site is built by Arg82 and Arg105. The active site involves Asp131. Positions 133 and 139 each coordinate beta-D-fructose 6-phosphate. Position 141 is a phosphoserine (Ser141). The active site involves Cys161. 170 to 175 contacts ATP; sequence NIKQVK. Beta-D-fructose 6-phosphate contacts are provided by Lys175, Arg196, and Tyr200. Residues 251-471 are fructose-2,6-bisphosphatase; sequence PRSIYLCRHG…EALDTVPAHY (221 aa). Arg258 is a beta-D-fructose 2,6-bisphosphate binding site. Catalysis depends on His259, which acts as the Tele-phosphohistidine intermediate. Beta-D-fructose 2,6-bisphosphate-binding residues include Asn265, Gly271, and Arg308. The active-site Proton donor/acceptor is Glu328. Beta-D-fructose 2,6-bisphosphate is bound by residues Tyr339, Arg353, Lys357, Tyr368, Gln394, and Arg398. An ATP-binding site is contributed by 350–353; sequence FALR. Residues 394–398 and Tyr430 contribute to the ATP site; that span reads QAVMR.

The protein in the C-terminal section; belongs to the phosphoglycerate mutase family. In terms of assembly, homodimer. In terms of tissue distribution, liver.

The catalysed reaction is beta-D-fructose 2,6-bisphosphate + H2O = beta-D-fructose 6-phosphate + phosphate. The enzyme catalyses beta-D-fructose 6-phosphate + ATP = beta-D-fructose 2,6-bisphosphate + ADP + H(+). Phosphorylation at Ser-33 inhibits the kinase and activates the bisphosphatase. Its function is as follows. Synthesis and degradation of fructose 2,6-bisphosphate. The polypeptide is 6-phosphofructo-2-kinase/fructose-2,6-bisphosphatase 1 (Mus musculus (Mouse)).